Reading from the N-terminus, the 388-residue chain is 3-dehydroquinate synthase (388 aa).

Belongs to the archaeal-type DHQ synthase family.

The enzyme catalyses 2-amino-2,3,7-trideoxy-D-lyxo-hept-6-ulosonate + NAD(+) + H2O = 3-dehydroquinate + NH4(+) + NADH + H(+). Its function is as follows. Catalyzes the oxidative deamination and cyclization of 2-amino-3,7-dideoxy-D-threo-hept-6-ulosonic acid (ADH) to yield 3-dehydroquinate (DHQ), which is fed into the canonical shikimic pathway of aromatic amino acid biosynthesis. In Natronomonas pharaonis (strain ATCC 35678 / DSM 2160 / CIP 103997 / JCM 8858 / NBRC 14720 / NCIMB 2260 / Gabara) (Halobacterium pharaonis), this protein is 3-dehydroquinate synthase.